Reading from the N-terminus, the 204-residue chain is UPF0637 protein USA300HOU_1046.1 (204 aa).

The protein belongs to the UPF0637 family.

The protein is UPF0637 protein USA300HOU_1046.1 of Staphylococcus aureus (strain USA300 / TCH1516).